The chain runs to 171 residues: Protein TIFY 11d (171 aa).

The Tify domain occupies 65–100; sequence PSAGTAPLTIFYDGRMVVVDDVPVEKAAELMRLAGS. The Jas motif lies at 117-142; sequence PIARKASLQRFLQKRKHRITTTSEPY. The Nuclear localization signal motif lies at 119-126; it reads ARKASLQR.

It belongs to the TIFY/JAZ family. In terms of assembly, interacts with BHLH148 and COI1A. Interacts with COI1A, COI1B and COI2 in a coronatine-dependent manner. Coronatine is an analog of jasmonoyl isoleucine (JA-Ile). In terms of processing, ubiquitinated. Increase in jasmonoyl isoleucine (JA-Ile) levels mediates its degradation via COI1A-mediated proteasome pathway.

The protein resides in the nucleus. In terms of biological role, repressor of jasmonate (JA) responses. May act on an initial response of JA-regulated gene expression toward drought tolerance as part of a BHLH148-TIFY11D/JAZ12-COI1A complex. The polypeptide is Protein TIFY 11d (Oryza sativa subsp. japonica (Rice)).